Consider the following 1682-residue polypeptide: Sodium channel protein type 7 subunit alpha (1682 aa).

Residues 1-117 (MLASPEPKGL…RRTTIKVLVH (117 aa)) are Cytoplasmic-facing. The I repeat unit spans residues 100–401 (TLSPFNCIRR…ILAMAYEEEK (302 aa)). A helical membrane pass occupies residues 118-137 (PFFQLFILISVLIDCVFMSL). The Extracellular segment spans residues 138-141 (TNLP). A helical membrane pass occupies residues 142-167 (KWRPVLENTLLGIYTFEILVKLFARG). The Cytoplasmic portion of the chain corresponds to 168-178 (VWAGSFSFLGD). The chain crosses the membrane as a helical span at residues 179–196 (PWNWLDFSVTVFEVIIRY). Over 197-200 (SPLD) the chain is Extracellular. A helical transmembrane segment spans residues 201–219 (FIPTLQTARTLRILKIIPL). The Cytoplasmic segment spans residues 220 to 237 (NQGLKSLVGVLIHCLKQL). Residues 238–259 (IGVIILTLFFLSIFSLIGMGLF) form a helical membrane-spanning segment. Topologically, residues 260–338 (MGNLKHKCFR…PDQGFTNFDS (79 aa)) are extracellular. A disulfide bridge links cysteine 267 with cysteine 307. N-linked (GlcNAc...) asparagine glycosylation is found at asparagine 276, asparagine 281, and asparagine 309. Positions 339-366 (FGWALFALFRLMAQDYPEVLYHQILYAS) form an intramembrane region, pore-forming. A topological domain (extracellular) is located at residue glycine 367. A helical membrane pass occupies residues 368 to 407 (KVYMIFFVVVSFLFSFYMASLFLGILAMAYEEEKQRVGEI). The Cytoplasmic segment spans residues 408–505 (SKKIEPKFQQ…EFVHRIIMAP (98 aa)). Serine 442 is modified (phosphoserine; by PKA). An II repeat occupies 487–758 (CSPCWLKLKE…QLAVARIKKG (272 aa)). A helical transmembrane segment spans residues 506–521 (FTDLFLIICIILNVCF). Residues 522-530 (LTLEHYPMS) are Extracellular-facing. Residues 531–559 (KQTNTLLNIGNLVFIGIFTAEMIFKIIAM) traverse the membrane as a helical segment. The Cytoplasmic portion of the chain corresponds to 560–568 (HPYGYFQVG). A helical transmembrane segment spans residues 569–586 (WNIFDSMIVFHGLIELCL). Topologically, residues 587-592 (ANVAGM) are extracellular. A helical transmembrane segment spans residues 593-609 (ALLRLFRMLRIFKLGKY). Topologically, residues 610-626 (WPTFQILMWSLSNSWVA) are cytoplasmic. Residues 627-655 (LKDLVLLLFTFIFFSAAFGMKLFGKNYEE) form a helical membrane-spanning segment. Over 656 to 673 (FVCHIDKDCQLPRWHMHD) the chain is Extracellular. 2 disulfides stabilise this stretch: cysteine 658–cysteine 664 and cysteine 696–cysteine 705. The pore-forming intramembrane region spans 674–700 (FFHSFLNVFRILCGEWVETLWDCMEVA). Glycine 701 is a topological domain (extracellular). The chain crosses the membrane as a helical span at residues 702–732 (QSWCIPFYLMVILIGNLLVLYLFLALVSSFS). Topologically, residues 733–934 (SCKDVTAEEN…KTCCKIVENN (202 aa)) are cytoplasmic. Threonine 777 carries the phosphothreonine; by PKA modification. The interval 801–871 (TQDFLKDKEK…SKEKIKQSSS (71 aa)) is disordered. A compositionally biased stretch (basic and acidic residues) spans 804–819 (FLKDKEKSSGTEKNAT). Polar residues predominate over residues 820–834 (ENESQSLIPSPSVSE). Serine 843 carries the phosphoserine modification. 2 positions are modified to phosphoserine; by PKA: serine 869 and serine 905. An III repeat occupies 916–1224 (KGKIWQNIRK…RKQYRRLKKL (309 aa)). The helical transmembrane segment at 935–953 (WFKCFIGLVTLLSTGTLAF) threads the bilayer. Residues 954–961 (EDIYMDQR) lie on the Extracellular side of the membrane. A helical transmembrane segment spans residues 962–990 (KTIKILLEYADMIFTYIFILEMLLKWMAY). Topologically, residues 991–998 (GFKAYFSN) are cytoplasmic. The helical transmembrane segment at 999-1020 (GWYRLDFVVVIVFCLSLIGKTR) threads the bilayer. A topological domain (extracellular) is located at residue glutamate 1021. A helical transmembrane segment spans residues 1022–1040 (ELKPLISMKFLRPLRVLSQ). The Cytoplasmic segment spans residues 1041–1055 (FERMKVVVRALIKTT). The helical transmembrane segment at 1056 to 1080 (LPTLNVFLVCLMIWLIFSIMGVDLF) threads the bilayer. Topologically, residues 1081–1127 (AGRFYECIDPTSGERFPSSEVMNKSRCESLLFNESMLWENAKMNFDN) are extracellular. A disulfide bridge links cysteine 1087 with cysteine 1107. Residues asparagine 1103 and asparagine 1113 are each glycosylated (N-linked (GlcNAc...) asparagine). An intramembrane region (pore-forming) is located at residues 1128 to 1154 (VGNGFLSLLQVATFNGWITIMNSAIDS). The Extracellular segment spans residues 1155–1167 (VAVNIQPHFEVNI). A helical membrane pass occupies residues 1168 to 1202 (YMYCYFINFIIFGVFLPLSMLITVIIDNFNKHKIK). Over 1203-1250 (LGGSNIFITVKQRKQYRRLKKLMYEDSQRPVPRPLNKLQGFIFDVVTS) the chain is Cytoplasmic. One copy of the IV repeat lies at 1233-1531 (VPRPLNKLQG…WKRFDPDRTQ (299 aa)). The chain crosses the membrane as a helical span at residues 1251 to 1272 (QAFNVIVMVLICFQAIAMMIDT). The Extracellular portion of the chain corresponds to 1273-1276 (DVQS). Residues 1277 to 1305 (LQMSIALYWINSIFVMLYTMECILKLIAF) traverse the membrane as a helical segment. The Cytoplasmic portion of the chain corresponds to 1306-1312 (RCFYFTI). The helical transmembrane segment at 1313 to 1338 (AWNIFDFMVVIFSITGLCLPMTVGSY) threads the bilayer. Residues 1339 to 1341 (LVP) lie on the Extracellular side of the membrane. The chain crosses the membrane as a helical span at residues 1342–1362 (PSLVQLILLSRIIHMLRLGKG). Residues 1363–1377 (PKVFHNLMLPLMLSL) are Cytoplasmic-facing. Residues 1378–1402 (PALLNIILLIFLVMFIYAVFGMYNF) traverse the membrane as a helical segment. Residues 1403–1420 (AYVKKEAGINDVSNFETF) lie on the Extracellular side of the membrane. Positions 1421-1444 (GNSMLCLFQVAIFAGWDGMLDAIF) form an intramembrane region, pore-forming. Residues 1445 to 1468 (NSKWSDCDPDKINPGTQVRGDCGN) are Extracellular-facing. Cysteines 1451 and 1466 form a disulfide. Residues 1469–1504 (PSVGIFYFVSYILISWLIIVNMYIVVVMEFLNIASK) form a helical membrane-spanning segment. Topologically, residues 1505 to 1682 (KKNKTLSEDD…KEKSPIQSQI (178 aa)) are cytoplasmic.

It belongs to the sodium channel (TC 1.A.1.10) family. SCN7A subfamily. The sodium channel formed by SCN7A is probably a heterooligomeric complex consisting of the ion conducting pore forming alpha subunit SCN7A and regulatory beta subunits such as SCN3B. Interacts with ATP1A1; activates ATP1A1 and thereby indirectly signals to nearby neurons to regulate sodium homeostasis. As to expression, heart and uterus.

The protein localises to the cell membrane. The enzyme catalyses Na(+)(in) = Na(+)(out). Its function is as follows. Sodium leak channel functioning as an osmosensor regulating sodium ion levels in various tissues and organs. While most sodium channels are voltage-gated, SCN7A is not and lets sodium flow through membrane along its concentration gradient. In glial cells of the central nervous system, senses body-fluid sodium levels and controls salt intake behavior as well as voluntary water intake through activation of nearby neurons to maintain appropriate sodium levels in the body. By mediating sodium influx into keratinocytes, also plays a role in skin barrier homeostasis. The protein is Sodium channel protein type 7 subunit alpha of Homo sapiens (Human).